Consider the following 541-residue polypeptide: CTP synthase (541 aa).

Residues 1–271 (MVGKLNPTRF…DTQILKHFDV (271 aa)) form an amidoligase domain region. Ser-19 contacts CTP. Position 19 (Ser-19) interacts with UTP. Residues 20 to 25 (SLGKGL) and Asp-77 each bind ATP. Positions 77 and 145 each coordinate Mg(2+). Residues 152 to 154 (DIE), 192 to 197 (KTKPTQ), and Lys-228 contribute to the CTP site. Residues 192 to 197 (KTKPTQ) and Lys-228 each bind UTP. The region spanning 296-537 (VIAIVGKYVT…VTSTLQVKKA (242 aa)) is the Glutamine amidotransferase type-1 domain. Gly-355 is a binding site for L-glutamine. Cys-382 functions as the Nucleophile; for glutamine hydrolysis in the catalytic mechanism. L-glutamine contacts are provided by residues 383–386 (LGMQ), Glu-406, and Arg-465. Catalysis depends on residues His-510 and Glu-512.

This sequence belongs to the CTP synthase family. As to quaternary structure, homotetramer.

The catalysed reaction is UTP + L-glutamine + ATP + H2O = CTP + L-glutamate + ADP + phosphate + 2 H(+). The enzyme catalyses L-glutamine + H2O = L-glutamate + NH4(+). It carries out the reaction UTP + NH4(+) + ATP = CTP + ADP + phosphate + 2 H(+). It functions in the pathway pyrimidine metabolism; CTP biosynthesis via de novo pathway; CTP from UDP: step 2/2. Allosterically activated by GTP, when glutamine is the substrate; GTP has no effect on the reaction when ammonia is the substrate. The allosteric effector GTP functions by stabilizing the protein conformation that binds the tetrahedral intermediate(s) formed during glutamine hydrolysis. Inhibited by the product CTP, via allosteric rather than competitive inhibition. In terms of biological role, catalyzes the ATP-dependent amination of UTP to CTP with either L-glutamine or ammonia as the source of nitrogen. Regulates intracellular CTP levels through interactions with the four ribonucleotide triphosphates. The sequence is that of CTP synthase from Anaplasma phagocytophilum (strain HZ).